We begin with the raw amino-acid sequence, 235 residues long: Small ribosomal subunit protein uS2 (235 aa).

It belongs to the universal ribosomal protein uS2 family.

The chain is Small ribosomal subunit protein uS2 from Thermoanaerobacter pseudethanolicus (strain ATCC 33223 / 39E) (Clostridium thermohydrosulfuricum).